The primary structure comprises 448 residues: Bud neck protein 5 (448 aa).

3 disordered regions span residues 63-103 (SGND…DPSQ), 171-211 (DDEW…TLGG), and 242-352 (GDNE…SSPI). Ser-70 and Ser-179 each carry phosphoserine. The segment covering 171–180 (DDEWEDEKSD) has biased composition (acidic residues). Residues 181–191 (VEEGRVDKGTE) are compositionally biased toward basic and acidic residues. Ser-194 carries the post-translational modification Phosphoserine. The span at 245–262 (EYNHESSRLADQTPHDDN) shows a compositional bias: basic and acidic residues. Position 257 is a phosphothreonine (Thr-257). Residues 264–281 (ENCPNRSGGSTPLDSQTK) show a composition bias toward polar residues. Ser-270 and Ser-273 each carry phosphoserine. The residue at position 274 (Thr-274) is a Phosphothreonine. Positions 325–343 (SVSSNSNSRNGSRKSSLNK) are enriched in low complexity. Phosphoserine is present on residues Ser-332 and Ser-340. Phosphotyrosine is present on Tyr-344. Residues Ser-346 and Ser-350 each carry the phosphoserine modification.

Component of the GIN4 complex composed of at least BNI5, CDC3, CDC10, CDC11, CDC12, GIN4, NAP1 and SHS1. Interacts directly with CDC11, CDC12 and SHS1.

Its subcellular location is the cytoplasm. The protein localises to the bud neck. Functionally, required for normal septin function and cytokinesis. Its recruitment to the bud neck by CDCd11 and SHS1 ensures efficient localization at the bud neck of MYO1, the type II myosin of the actomyosin contractile ring. This chain is Bud neck protein 5, found in Saccharomyces cerevisiae (strain ATCC 204508 / S288c) (Baker's yeast).